We begin with the raw amino-acid sequence, 401 residues long: MSLYDDLGVETSDSKTEGWSKNFKLLQSQLQVKKAALTQAKSQRTKQSTVLAPVIDLKRGGSSDDRQIVDTPPHVAAGLKDPVPSGFSAGEVLIPLADEYDPMFPNDYEKVVKRQREERQRQRELERQKEIEEREKRRKDRHEASGFARRPDPDSDEDEDYERERRKRSMGGAAIAPPTSLVEKDKELPRDFPYEEDSRPRSQSSKAAIPPPVYEEQDRPRSPTGPSNSFLANMGGTVAHKIMQKYGFREGQGLGKHEQGLSTALSVEKTSKRGGKIIVGDATEKDASKKSDSNPLTEILKCPTKVVLLRNMVGAGEVDEDLEVETKEECEKYGKVGKCVIFEIPGAPDDEAVRIFLEFERVESAIKAVVDLNGRYFGGRVVKACFYNLDKFRVLDLAEQV.

Residue Ser2 is modified to N-acetylserine. Position 2 is a phosphoserine (Ser2). Residue Lys15 forms a Glycyl lysine isopeptide (Lys-Gly) (interchain with G-Cter in SUMO2) linkage. N6-acetyllysine is present on Lys21. Glycyl lysine isopeptide (Lys-Gly) (interchain with G-Cter in SUMO2) cross-links involve residues Lys24 and Lys33. Lys41 bears the N6-acetyllysine; alternate mark. Residue Lys41 forms a Glycyl lysine isopeptide (Lys-Gly) (interchain with G-Cter in SUMO2); alternate linkage. Over residues 57 to 68 the composition is skewed to basic and acidic residues; sequence LKRGGSSDDRQI. Disordered stretches follow at residues 57–84 and 114–233; these read LKRG…DPVP and RQRE…FLAN. Residue Lys58 forms a Glycyl lysine isopeptide (Lys-Gly) (interchain with G-Cter in SUMO2) linkage. Phosphothreonine is present on Thr71. The span at 114–153 shows a compositional bias: basic and acidic residues; that stretch reads RQREERQRQRELERQKEIEEREKRRKDRHEASGFARRPDP. Phosphoserine occurs at positions 155 and 169. A compositionally biased stretch (basic and acidic residues) spans 182-200; it reads VEKDKELPRDFPYEEDSRP. A Phosphoserine modification is found at Ser222. The 49-residue stretch at 235–283 folds into the G-patch domain; it reads GGTVAHKIMQKYGFREGQGLGKHEQGLSTALSVEKTSKRGGKIIVGDAT. Thr237 is subject to Phosphothreonine. Lys256 is covalently cross-linked (Glycyl lysine isopeptide (Lys-Gly) (interchain with G-Cter in SUMO2)). Residue Ser266 is modified to Phosphoserine. Lys276 participates in a covalent cross-link: Glycyl lysine isopeptide (Lys-Gly) (interchain with G-Cter in SUMO2). Phosphoserine is present on residues Ser291 and Ser293. One can recognise an RRM domain in the interval 306–385; sequence VVLLRNMVGA…YFGGRVVKAC (80 aa).

As to quaternary structure, binds SXL. Associates with the spliceosome. Interacts with SF3B1, SF1 and U2AF2.

The protein localises to the nucleus. Functionally, splice factor that binds to the single-stranded 3'AG at the exon/intron border and promotes its utilization in the second catalytic step. Involved in the regulation of alternative splicing and the utilization of cryptic splice sites. Promotes the utilization of a cryptic splice site created by the beta-110 mutation in the HBB gene. The resulting frameshift leads to sickle cell anemia. This is Splicing factor 45 (RBM17) from Homo sapiens (Human).